A 193-amino-acid polypeptide reads, in one-letter code: Large ribosomal subunit protein uL5 (193 aa).

The protein belongs to the universal ribosomal protein uL5 family. As to quaternary structure, part of the 50S ribosomal subunit; part of the 5S rRNA/L5/L18/L25 subcomplex. Contacts the 5S rRNA and the P site tRNA. Forms a bridge to the 30S subunit in the 70S ribosome.

In terms of biological role, this is one of the proteins that bind and probably mediate the attachment of the 5S RNA into the large ribosomal subunit, where it forms part of the central protuberance. In the 70S ribosome it contacts protein S13 of the 30S subunit (bridge B1b), connecting the 2 subunits; this bridge is implicated in subunit movement. Contacts the P site tRNA; the 5S rRNA and some of its associated proteins might help stabilize positioning of ribosome-bound tRNAs. This Rhizorhabdus wittichii (strain DSM 6014 / CCUG 31198 / JCM 15750 / NBRC 105917 / EY 4224 / RW1) (Sphingomonas wittichii) protein is Large ribosomal subunit protein uL5.